Reading from the N-terminus, the 545-residue chain is CTP synthase (545 aa).

The segment at 1–266 (MTTNYIFVTG…DDYICKRFSL (266 aa)) is amidoligase domain. Ser-14 lines the CTP pocket. Ser-14 contacts UTP. ATP is bound by residues 15–20 (SLGKGI) and Asp-72. Mg(2+) is bound by residues Asp-72 and Glu-140. CTP contacts are provided by residues 147-149 (DIE), 187-192 (KTKPTQ), and Lys-223. Residues 187–192 (KTKPTQ) and Lys-223 contribute to the UTP site. 239-241 (KDV) lines the ATP pocket. Positions 291 to 542 (TIGMVGKYIE…VKAASEYQKR (252 aa)) constitute a Glutamine amidotransferase type-1 domain. An L-glutamine-binding site is contributed by Gly-352. Residue Cys-379 is the Nucleophile; for glutamine hydrolysis of the active site. Residues 380–383 (LGMQ), Glu-403, and Arg-470 each bind L-glutamine. Active-site residues include His-515 and Glu-517.

The protein belongs to the CTP synthase family. As to quaternary structure, homotetramer.

The enzyme catalyses UTP + L-glutamine + ATP + H2O = CTP + L-glutamate + ADP + phosphate + 2 H(+). It catalyses the reaction L-glutamine + H2O = L-glutamate + NH4(+). The catalysed reaction is UTP + NH4(+) + ATP = CTP + ADP + phosphate + 2 H(+). It functions in the pathway pyrimidine metabolism; CTP biosynthesis via de novo pathway; CTP from UDP: step 2/2. Its activity is regulated as follows. Allosterically activated by GTP, when glutamine is the substrate; GTP has no effect on the reaction when ammonia is the substrate. The allosteric effector GTP functions by stabilizing the protein conformation that binds the tetrahedral intermediate(s) formed during glutamine hydrolysis. Inhibited by the product CTP, via allosteric rather than competitive inhibition. In terms of biological role, catalyzes the ATP-dependent amination of UTP to CTP with either L-glutamine or ammonia as the source of nitrogen. Regulates intracellular CTP levels through interactions with the four ribonucleotide triphosphates. This Enterobacter sp. (strain 638) protein is CTP synthase.